Here is a 480-residue protein sequence, read N- to C-terminus: Aromatic-L-amino-acid decarboxylase (480 aa).

N-acetylmethionine is present on Met-1. 2 consecutive repeat copies span residues 58 to 115 (GDIE…TELE) and 118 to 178 (MLDW…TQAA). The tract at residues 58-178 (GDIERIIMPG…AASPELTQAA (121 aa)) is 2 X approximate tandem repeats. Thr-82 contributes to the substrate binding site. Positions 148 and 149 each coordinate pyridoxal 5'-phosphate. His-192 is a substrate binding site. Pyridoxal 5'-phosphate contacts are provided by Thr-246 and Asn-300. An N6-(pyridoxal phosphate)lysine modification is found at Lys-303.

The protein belongs to the group II decarboxylase family. Homodimer. It depends on pyridoxal 5'-phosphate as a cofactor.

The enzyme catalyses L-dopa + H(+) = dopamine + CO2. It carries out the reaction 5-hydroxy-L-tryptophan + H(+) = serotonin + CO2. It participates in catecholamine biosynthesis; dopamine biosynthesis; dopamine from L-tyrosine: step 2/2. Its function is as follows. Catalyzes the decarboxylation of L-3,4-dihydroxyphenylalanine (DOPA) to dopamine and L-5-hydroxytryptophan to serotonin. The protein is Aromatic-L-amino-acid decarboxylase (DDC) of Cavia porcellus (Guinea pig).